The following is a 754-amino-acid chain: MTSFFSSTIAGVPRIGAHRELKFALEGFWSGTVSGRELGQTATTLTNDYCDQLAAAGLDSIPTAGRSYYDAMLDTTALLGVFPERFQNLDDHPNDGLPAHIDRYFATARGTAELPASAMTKWFDTNYHYLVPELSADTRFILDDTALLTDIHDQLTRGHDVRPVLIGPLTYLSLSRTTDGSDPLDHLETLFEVFERLLAKLPTPWVQLDEPSLVTDVAPEVLERVRAGYARLATRGGVFVNTYFGAGDQALDTLAGLGLGAIGVDLVSDGVTALEAWKGEELLVAGIVDGRNVWRTDLCAALGTLRRLQARGPVAVSTSCSLLHVPYALTAETGLNPEVREWLAFGEEKVREVVALADALAGEINESLFDAAAAALADRRHSVLTAARDADITDADRSRSPFEVRAAAQDEALDLPPLPTTTIGSFPQTREIRSARARYRAGHLTPEQYEDAMRAEIAQVIRAQEDLGLDVLVHGEPERNDMVQYFAELLDGFLTTTNGWVQSYGSRCVRPPILFGTVTRPEPMTVRWFAHAQSLTNRPVKGMLTGPVTILAWSFVRDDQPLAVTADQIALALREEITDLVDAGAKIIQVDEPAIRELLPLRRAEQDAYTRWAVGAFRLSTSTAPDHVQIHTHMCYSEFNELIRSIIDLDADVTTIEAARSDMQVLAALKSSGFHLGVGPGVWDIHSPRVPELAEVSQLLSSALESVDPRRLWVNPDCGLKTRGWEETTASLKVLVAAAEQARTDLLQRASTSA.

Residues 19 to 22 (RELK) and Lys-121 contribute to the 5-methyltetrahydropteroyltri-L-glutamate site. L-homocysteine is bound by residues 423 to 425 (IGS) and Glu-476. Residues 423–425 (IGS) and Glu-476 contribute to the L-methionine site. 5-methyltetrahydropteroyltri-L-glutamate-binding positions include 507-508 (RC) and Trp-553. Asp-591 contributes to the L-homocysteine binding site. An L-methionine-binding site is contributed by Asp-591. Position 597 (Glu-597) interacts with 5-methyltetrahydropteroyltri-L-glutamate. His-633, Cys-635, and Glu-657 together coordinate Zn(2+). His-686 serves as the catalytic Proton donor. A Zn(2+)-binding site is contributed by Cys-718.

This sequence belongs to the vitamin-B12 independent methionine synthase family. The cofactor is Zn(2+).

It catalyses the reaction 5-methyltetrahydropteroyltri-L-glutamate + L-homocysteine = tetrahydropteroyltri-L-glutamate + L-methionine. It functions in the pathway amino-acid biosynthesis; L-methionine biosynthesis via de novo pathway; L-methionine from L-homocysteine (MetE route): step 1/1. Its function is as follows. Catalyzes the transfer of a methyl group from 5-methyltetrahydrofolate to homocysteine resulting in methionine formation. The protein is 5-methyltetrahydropteroyltriglutamate--homocysteine methyltransferase of Corynebacterium efficiens (strain DSM 44549 / YS-314 / AJ 12310 / JCM 11189 / NBRC 100395).